The chain runs to 232 residues: Lipid A 1-phosphatase (232 aa).

The next 6 membrane-spanning stretches (helical) occupy residues 10–30 (LFIT…PVGA), 42–62 (ELLT…LLFF), 80–100 (ALYV…SGLL), 136–156 (FPSG…LLFP), 160–180 (VAFI…GAHY), and 183–203 (DVIA…IVYA).

The protein belongs to the lipid A LpxE 1-phosphatase family.

Its subcellular location is the cell inner membrane. The protein operates within bacterial outer membrane biogenesis; LPS lipid A biosynthesis. Functionally, probably removes the 1-phosphate moiety from lipid A species. Does not seem to act on other membrane components, nor does it dephosphorylate the 4'-phosphate group of lipid A and/or lipid A precursors. In Rhizobium etli (strain ATCC 51251 / DSM 11541 / JCM 21823 / NBRC 15573 / CFN 42), this protein is Lipid A 1-phosphatase.